Reading from the N-terminus, the 75-residue chain is uncharacterized protein (75 aa).

Its subcellular location is the plastid. The protein localises to the chloroplast. This is an uncharacterized protein from Calycanthus floridus var. glaucus (Eastern sweetshrub).